A 231-amino-acid chain; its full sequence is Protein RhiA (231 aa).

Its function is as follows. May be involved in plant-microbe interaction. The sequence is that of Protein RhiA (rhiA) from Rhizobium leguminosarum bv. viciae.